The following is a 630-amino-acid chain: Ubiquitin carboxyl-terminal hydrolase MINDY-2 (630 aa).

A disordered region spans residues 1-209 (MESGPESLQP…RVPEEEEGAA (209 aa)). The segment covering 24–33 (GSPQEGQQET) has biased composition (polar residues). Position 94 is a phosphoserine (S94). 2 stretches are compositionally biased toward low complexity: residues 141–163 (EESA…SCSD) and 170–191 (SPSL…SSEF). The Nucleophile role is filled by C267. H449 functions as the Proton acceptor in the catalytic mechanism. Residues 508–560 (GQQDQIDQDYLMALSLQQEQQSQEINWEQIPEGISDLELAKKLQEEEDRRASQ) are ubiquitin-binding domain (UBD). Over residues 564–599 (EQEQAAAAAASASASASASASTQAPQSQPVQASPSS) the composition is skewed to low complexity. The tract at residues 564-630 (EQEQAAAAAA…EKEKNSCVIL (67 aa)) is disordered. The segment covering 606-630 (SERKRKEPREKDKEKEKEKNSCVIL) has biased composition (basic and acidic residues).

This sequence belongs to the MINDY deubiquitinase family. FAM63 subfamily.

The catalysed reaction is Thiol-dependent hydrolysis of ester, thioester, amide, peptide and isopeptide bonds formed by the C-terminal Gly of ubiquitin (a 76-residue protein attached to proteins as an intracellular targeting signal).. Its function is as follows. Hydrolase that can remove 'Lys-48'-linked conjugated ubiquitin from proteins. Can also bind to polyubiquitin chains of different linkage types, including 'Lys-6', 'Lys-11', 'Lys-29', 'Lys-33' and 'Lys-63'. May play a regulatory role at the level of protein turnover. The sequence is that of Ubiquitin carboxyl-terminal hydrolase MINDY-2 (MINDY2) from Bos taurus (Bovine).